The chain runs to 123 residues: uncharacterized protein (123 aa).

This is an uncharacterized protein from Homo sapiens (Human).